The chain runs to 521 residues: MMLMMLPFIGSVSVSESLVAMTTMCLVYLILKFFQTEIPEGLRRLPGPKPLPIIGNVLGLGSKPYLSLTAMSKRYGHVFQIQIGMRPVVVLSGTGTVRQALIKQGDEFAGRPDLYSFRFINAGKSLAFSTDQAGVWRARRKLAYSALRSFSTLEGTTPEYSCVLEEHICKEGEYLIKQLNTVMKADGSFDPFRHIVVSVANVICGMCFGRRYDHDDQELVSLVTLSDEFGRVVGSGNPADFIPILQYLPSAEMKNFLRINEHFTEFVQKIVTEHYTTFNKDNIRDITDSLIDHCEDRKLDENSNVQMSDEKIVGIVNDLFGAGFDTVSTALSWSVMYLVAHPEIQERLYQEIEDKVGLDRMPLLSDKPNLPFLEAFILEILRHSSFLPFTIPHCTTKDTSLNGYFIPKDTCVFINQWQINHDPELWKDPSSFNPDRFLSADGSEVNKLDGEKVMAFGMGKRRCIGEVIARNEVYLFLAIIIQKLHFLPIPGEKLDMTPEYGLTMKHKRCHLKATMRARNEH.

F229 serves as a coordination point for substrate. C463 provides a ligand contact to heme.

This sequence belongs to the cytochrome P450 family. It depends on heme as a cofactor.

The protein resides in the endoplasmic reticulum membrane. It localises to the microsome membrane. It carries out the reaction an organic molecule + reduced [NADPH--hemoprotein reductase] + O2 = an alcohol + oxidized [NADPH--hemoprotein reductase] + H2O + H(+). Its function is as follows. Cytochromes P450 are a group of heme-thiolate monooxygenases. They oxidize a variety of structurally unrelated compounds, including steroids, fatty acids, and xenobiotics. In Pleuronectes platessa (European plaice), this protein is Cytochrome P450 1A1 (cyp1a1).